Reading from the N-terminus, the 388-residue chain is 1D-myo-inositol 2-acetamido-2-deoxy-alpha-D-glucopyranoside deacetylase (388 aa).

Residues His6, Asp9, and His144 each coordinate Zn(2+). The segment at 369 to 388 (LDQADEGAAHDTSEQSGQRR) is disordered.

The protein belongs to the MshB deacetylase family. It depends on Zn(2+) as a cofactor.

It catalyses the reaction 1D-myo-inositol 2-acetamido-2-deoxy-alpha-D-glucopyranoside + H2O = 1D-myo-inositol 2-amino-2-deoxy-alpha-D-glucopyranoside + acetate. Its function is as follows. Catalyzes the deacetylation of 1D-myo-inositol 2-acetamido-2-deoxy-alpha-D-glucopyranoside (GlcNAc-Ins) in the mycothiol biosynthesis pathway. The sequence is that of 1D-myo-inositol 2-acetamido-2-deoxy-alpha-D-glucopyranoside deacetylase from Corynebacterium kroppenstedtii (strain DSM 44385 / JCM 11950 / CIP 105744 / CCUG 35717).